The primary structure comprises 490 residues: MNNLESWEAVIGLETHVQLNTKSKIFTSASTAFGDAPNTHIDPVVCGLPGTLPVLNETVLEYAVKTSLALNLNVAEHCKFDRKQYFYPDLPKNYQISQFDEPLAENGWLEVEIIEKDKEPYIKKIGIERLHMEEDAGKLVHSGSDRLAGSKYSLVDYNRAGIALCEIVSKPDIRSGKEASEYASEIRRTVRYLGVSDGNMQEGSLRCDVNISVRKGPNAPFGTKVEIKNMNSFSAIQKACDYEIARQIEVYENGGKIFQETRLWDEAKQLTKSMRLKEGSSDYRYFPDPDLGPIEITKAQQEIWFKELPELPSKKRYKYVSQFGLSAYDARVISDEISMANFFEETVANGAEAKLASNWVTSDIVGYLKSNKLSFSELKLSPENLAEMINMISKNIISGKIAKEILPELIQKNISPKKLVEEKGLAMISDSSSISPIIDELINEHPNEVQAFKNGKTKLLGFFVGQLMKRTKGKADPKLANKLLMEKLNS.

It belongs to the GatB/GatE family. GatB subfamily. Heterotrimer of A, B and C subunits.

It catalyses the reaction L-glutamyl-tRNA(Gln) + L-glutamine + ATP + H2O = L-glutaminyl-tRNA(Gln) + L-glutamate + ADP + phosphate + H(+). The enzyme catalyses L-aspartyl-tRNA(Asn) + L-glutamine + ATP + H2O = L-asparaginyl-tRNA(Asn) + L-glutamate + ADP + phosphate + 2 H(+). In terms of biological role, allows the formation of correctly charged Asn-tRNA(Asn) or Gln-tRNA(Gln) through the transamidation of misacylated Asp-tRNA(Asn) or Glu-tRNA(Gln) in organisms which lack either or both of asparaginyl-tRNA or glutaminyl-tRNA synthetases. The reaction takes place in the presence of glutamine and ATP through an activated phospho-Asp-tRNA(Asn) or phospho-Glu-tRNA(Gln). The sequence is that of Aspartyl/glutamyl-tRNA(Asn/Gln) amidotransferase subunit B from Prochlorococcus marinus (strain AS9601).